The sequence spans 218 residues: uncharacterized protein (218 aa).

This is an uncharacterized protein from Orgyia pseudotsugata multicapsid polyhedrosis virus (OpMNPV).